Reading from the N-terminus, the 603-residue chain is NADH-quinone oxidoreductase subunit C/D (603 aa).

The tract at residues methionine 1–glutamate 193 is NADH dehydrogenase I subunit C. The tract at residues aspartate 217 to arginine 603 is NADH dehydrogenase I subunit D.

This sequence in the N-terminal section; belongs to the complex I 30 kDa subunit family. The protein in the C-terminal section; belongs to the complex I 49 kDa subunit family. NDH-1 is composed of 13 different subunits. Subunits NuoB, CD, E, F, and G constitute the peripheral sector of the complex.

The protein resides in the cell inner membrane. The enzyme catalyses a quinone + NADH + 5 H(+)(in) = a quinol + NAD(+) + 4 H(+)(out). Its function is as follows. NDH-1 shuttles electrons from NADH, via FMN and iron-sulfur (Fe-S) centers, to quinones in the respiratory chain. The immediate electron acceptor for the enzyme in this species is believed to be ubiquinone. Couples the redox reaction to proton translocation (for every two electrons transferred, four hydrogen ions are translocated across the cytoplasmic membrane), and thus conserves the redox energy in a proton gradient. The sequence is that of NADH-quinone oxidoreductase subunit C/D from Cronobacter sakazakii (strain ATCC BAA-894) (Enterobacter sakazakii).